The following is a 498-amino-acid chain: Envelop protein OPG153 (498 aa).

Cysteines 43 and 342 form a disulfide. The tract at residues 352 to 391 is disordered; that stretch reads ATDTGHHQDSKINIKDDDVDDDDYNPKPTPIPEPYPRPPF. Residues 355–367 show a composition bias toward basic and acidic residues; the sequence is TGHHQDSKINIKD. The segment covering 378–390 has biased composition (pro residues); the sequence is KPTPIPEPYPRPP.

The protein belongs to the orthopoxvirus OPG153 protein family. In terms of assembly, interacts with proteins OPG094 and OPG143. Interacts with OPG154. Interacts with OPG152. Interacts with host laminin.

Its subcellular location is the virion membrane. Its function is as follows. Envelop protein that mediates acid-dependent endocytosis into host cells. Plays an important role in endocytic entry of the virus by acting as an acid-sensitive membrane fusion suppressor. Low pH in host endosomes triggers conformational changes to allow de-repression of viral fusion complex activity and membrane fusion within vesicles. Also plays a role in bridging the mature virion with structural protein OPG152. The protein is Envelop protein OPG153 (Protein OPG153) of Variola virus (isolate Human/India/Ind3/1967) (VARV).